Consider the following 125-residue polypeptide: Small ribosomal subunit protein eS8 (125 aa).

The protein belongs to the eukaryotic ribosomal protein eS8 family. In terms of assembly, part of the 30S ribosomal subunit.

The protein is Small ribosomal subunit protein eS8 of Methanosarcina acetivorans (strain ATCC 35395 / DSM 2834 / JCM 12185 / C2A).